The following is a 1323-amino-acid chain: MDPDIENERIEDRKKWGHKDVEHWRAVSNVHYYTREGFYGTAILVCDGRLATVQDVPLAILKGVCLVLLGKIPEAIRHLEAFSNDQNFSLGALYALKWAHASAFNPDSKSIVEIEAEISKTARNEKTPYTSYASAAEVLYFAGEFQKAKQNLDIAGKRSTEKHAKYYCLMGWIDLGLGKKQKSTQELFEKAGGQEYPDGNIGRCKILEGHHSASEMRVAANELAISTIHFLPGHIEKAKALIMLRDWHGVMDCIVNADQQEGSNPYIEILRTTHGICFAGEVSQLNRTLQLLLKSLDDNESINHALYAKITKLIVSISGKNEKILRHARDFLIRALKLSRKPDYVALSLRIAFGLGDAREVSVLSQELIALDCEDPYAILSSVTSMLMVSRVSDARAQFDIMPAAHPKLLESPFYYLIASVLAKHSKDKSFENFRQHIENLIEMLRNQLQSFPFGIDYLLLFSSDLLYFAIEQCFDFYPLVPMKAPDDTMKLTSKMLQMIYDVAPGLAYCALQLARNCYLVSNTNAAEKWIYKALEKDDSLADAHILRAQLILDRGGKIQDADDALVTGLNFNFKLRETSLYHLIKSKTFKKRNENDEALKTLKMALQIPKKEMSNNLFVPKESADTHKISVQLELIDTLRQTKRIQDAEDTMADAMAEWAGQPEQHQLVIAQAQLYLTKGHTEKALAILRKIQPGQSNFHLSRIRMAEIYLEEKKDKRMFAACYRELLKVEPTPGSYSLLGDAFMKVQEPEDAINFYEQALKMQSKDVQLAEKIGEAYVMAHLYSKAVNFYESSMNIYKDKNMRLKLANLLLRLKNYEKCEKILRAPLDREPEPSDTETIQTHIQFLLLLAECHEMVENIPEAMKDFEKAKSLHNKIQDKTNTTGLRKEGARICNLQAELYYRRHEFPPAIEVCKQALQFYETDLKSNLLLSRIYKDENKWTLVLQPCQAVLQVDPHNDEANLILADFYYIKSEADHAMTSYITLLNKNPLHWHALFRVVELYCRKGEHHKADEFLNSARDANPRCVTEAGYSVCRGRFEWYTGDQSQALRCYSRAKDSPNVVWREKALYAIIDICLNPENEKILDADSVENAEQKTTEEAADQQSTAQVYLDLLGKVGPTERYRLAQNFVRMHTTDKNTIMATIDEFNKMAYAADKSIISVAAIYGIAKGYWLLKKQQPAKQLLKSLHGRVWNFDDAEYLEKCWLLMAEIYVGASKWEQAGTYLDQVLKYNCNSLRAFELYGQAKEKEQKYVEASKIYEKAFNTTNQKSCSFGYKLAFTLLKTRRLFLCIETCQKVLDINPQYPKIQREIMDKARGMIRTT.

TPR repeat units follow at residues 56–89, 411–444, 580–613, 667–700, 702–735, 736–768, 770–802, 804–835, 845–878, 892–925, 927–959, 961–993, 995–1027, 1031–1064, 1203–1236, 1238–1270, and 1272–1305; these read VPLAILKGVCLVLLGKIPEAIRHLEAFSNDQNFS, ESPFYYLIASVLAKHSKDKSFENFRQHIENLIEM, SLYHLIKSKTFKKRNENDEALKTLKMALQIPKKE, HQLVIAQAQLYLTKGHTEKALAILRKIQPGQSNF, LSRIRMAEIYLEEKKDKRMFAACYRELLKVEPTP, GSYSLLGDAFMKVQEPEDAINFYEQALKMQSKD, QLAEKIGEAYVMAHLYSKAVNFYESSMNIYKDK, MRLKLANLLLRLKNYEKCEKILRAPLDREPEP, IQFLLLLAECHEMVENIPEAMKDFEKAKSLHNKI, ARICNLQAELYYRRHEFPPAIEVCKQALQFYETD, KSNLLLSRIYKDENKWTLVLQPCQAVLQVDPHN, EANLILADFYYIKSEADHAMTSYITLLNKNPLH, HALFRVVELYCRKGEHHKADEFLNSARDANPRC, AGYSVCRGRFEWYTGDQSQALRCYSRAKDSPNVV, EKCWLLMAEIYVGASKWEQAGTYLDQVLKYNCNS, RAFELYGQAKEKEQKYVEASKIYEKAFNTTNQK, and CSFGYKLAFTLLKTRRLFLCIETCQKVLDINPQY.

Belongs to the TTC21 family.

The polypeptide is Tetratricopeptide repeat protein 21 homolog (Caenorhabditis briggsae).